The sequence spans 717 residues: Cleavage stimulation factor subunit 3 (717 aa).

The residue at position 2 (Ser2) is an N-acetylserine. 9 HAT repeats span residues 45 to 77, 79 to 110, 117 to 152, 163 to 196, 221 to 261, 271 to 303, 319 to 352, 354 to 387, and 458 to 494; these read QPIDKARKTYERLVAQFPSSGRFWKLYIEAEIK, KNYDKVEKLFQRCLMKVLHIDLWKCYLSYVRE, SYKEKMAQAYDFALDKIGMEIMSYQIWVDYINFLKG, QRITAVRRVYQRGCVNPMINIEQLWRDYNKYEEG, KEYE…WEKS, LITKRVMFAYEQCLLVLGHHPDIWYEAAQYLEQ, LFSDEAANIYERAISTLLKKNMLLYFAYADYEES, MKYEKVHSIYNRLLAIEDIDPTLVYIQYMKFARR, and NEDNNTRVLFERVLTSGSLPPEKSGEIWARFLAFESN. Residues 683-704 are disordered; the sequence is AVKRPNEDSDEDEEKGAVVPPV. Ser691 is subject to Phosphoserine.

Homodimer. The CSTF complex is composed of CSTF1 (50 kDa subunit), CSTF2 (64 kDa subunit) and CSTF3 (77 kDa subunit). CSTF3 directly interacts with CSTF1 and CSTF2. Interacts with FIP1L1.

The protein localises to the nucleus. Functionally, one of the multiple factors required for polyadenylation and 3'-end cleavage of mammalian pre-mRNAs. The polypeptide is Cleavage stimulation factor subunit 3 (Cstf3) (Mus musculus (Mouse)).